Here is a 926-residue protein sequence, read N- to C-terminus: Alpha-aminoadipic semialdehyde synthase, mitochondrial (926 aa).

A mitochondrion-targeting transit peptide spans 1–27; sequence MLRAQRPRLARLRACLSRGLHHKPVMA. The lysine-ketoglutarate reductase stretch occupies residues 28–455; sequence LRREDVNAWE…DAVITSNGLL (428 aa). An N6-acetyllysine mark is found at Lys48, Lys52, and Lys56. An N6-acetyllysine; alternate modification is found at Lys93. Residue Lys93 is modified to N6-succinyllysine; alternate. Residue Lys128 is modified to N6-acetyllysine. Lys138 carries the N6-acetyllysine; alternate modification. Residue Lys138 is modified to N6-succinyllysine; alternate. At Lys274 the chain carries N6-succinyllysine. Lys286 bears the N6-acetyllysine; alternate mark. Lys286 is modified (N6-succinyllysine; alternate). Position 333 is an N6-succinyllysine (Lys333). Residue Lys458 is modified to N6-acetyllysine; alternate. Lys458 is modified (N6-succinyllysine; alternate). The saccharopine dehydrogenase stretch occupies residues 477 to 926; that stretch reads MSTKKKVLVL…VFNTQSTIKL (450 aa). Positions 488, 512, and 516 each coordinate NAD(+). Residues Lys523 and Lys535 each carry the N6-acetyllysine; alternate modification. Residues Lys523 and Lys535 each carry the N6-succinyllysine; alternate modification. NAD(+) contacts are provided by Leu554, Ala576, and Ser577. 577–578 provides a ligand contact to L-saccharopine; sequence SY. Lys584 carries the N6-acetyllysine; alternate modification. An N6-succinyllysine; alternate modification is found at Lys584. Residues Leu603, Asp604, and Pro605 each contribute to the NAD(+) site. Asp604 contacts L-saccharopine. Residue Arg703 coordinates L-saccharopine. Lys707 is modified (N6-acetyllysine). 724–726 serves as a coordination point for L-saccharopine; sequence TLR. An N6-succinyllysine modification is found at Lys732. Lys739 is modified (N6-acetyllysine). Position 761 is an N6-acetyllysine; alternate (Lys761). An N6-succinyllysine; alternate modification is found at Lys761. N6-acetyllysine occurs at positions 778 and 780.

This sequence in the N-terminal section; belongs to the AlaDH/PNT family. In the C-terminal section; belongs to the saccharopine dehydrogenase family. As to quaternary structure, homotetramer. Highly expressed in kidney and liver, very low expression is seen in heart, brain, spleen, lung, skeletal muscle and testis.

It localises to the mitochondrion. The catalysed reaction is L-saccharopine + NADP(+) + H2O = L-lysine + 2-oxoglutarate + NADPH + H(+). It catalyses the reaction L-saccharopine + NAD(+) + H2O = (S)-2-amino-6-oxohexanoate + L-glutamate + NADH + H(+). It functions in the pathway amino-acid degradation; L-lysine degradation via saccharopine pathway; glutaryl-CoA from L-lysine: step 1/6. It participates in amino-acid degradation; L-lysine degradation via saccharopine pathway; glutaryl-CoA from L-lysine: step 2/6. Functionally, bifunctional enzyme that catalyzes the first two steps in lysine degradation. This chain is Alpha-aminoadipic semialdehyde synthase, mitochondrial, found in Mus musculus (Mouse).